The sequence spans 394 residues: Cobalt-precorrin-5B C(1)-methyltransferase (394 aa).

This sequence belongs to the CbiD family.

It carries out the reaction Co-precorrin-5B + S-adenosyl-L-methionine = Co-precorrin-6A + S-adenosyl-L-homocysteine. Its pathway is cofactor biosynthesis; adenosylcobalamin biosynthesis; cob(II)yrinate a,c-diamide from sirohydrochlorin (anaerobic route): step 6/10. In terms of biological role, catalyzes the methylation of C-1 in cobalt-precorrin-5B to form cobalt-precorrin-6A. The polypeptide is Cobalt-precorrin-5B C(1)-methyltransferase (Clostridium beijerinckii (strain ATCC 51743 / NCIMB 8052) (Clostridium acetobutylicum)).